Consider the following 435-residue polypeptide: Asparagine--tRNA ligase (435 aa).

Belongs to the class-II aminoacyl-tRNA synthetase family. As to quaternary structure, homodimer.

The protein localises to the cytoplasm. The enzyme catalyses tRNA(Asn) + L-asparagine + ATP = L-asparaginyl-tRNA(Asn) + AMP + diphosphate + H(+). The protein is Asparagine--tRNA ligase of Leptospira borgpetersenii serovar Hardjo-bovis (strain JB197).